Reading from the N-terminus, the 107-residue chain is Potassium voltage-gated channel subfamily E member 3 (107 aa).

3 N-linked (GlcNAc...) asparagine glycosylation sites follow: Asn5, Asn22, and Asn45. A disordered region spans residues 31-54 (CRPGPGPGSGTGPDNQTEDHRASL). The chain crosses the membrane as a helical span at residues 61–81 (SYMYILFVMFLFAVTVGSLIL). The interval 72–83 (FAVTVGSLILGY) is interaction with KCNQ1. At 82-103 (GYTRSRKVDKRSDPYHVYIKNR) the chain is on the cytoplasmic side.

Belongs to the potassium channel KCNE family. Interacts with KCNB1. Interacts with KCNC2. Associates with KCNC4/Kv3.4. Interacts with KCNQ1; associates with a KCNQ1:KCNE3 stoichiometry of 4:4; produces a current with nearly instantaneous activation with a linear current-voltage relationship and alters membrane raft localization; affects KCNQ1 structure and gating properties.

It localises to the cell membrane. It is found in the cytoplasm. The protein localises to the perikaryon. The protein resides in the cell projection. Its subcellular location is the dendrite. It localises to the membrane raft. Functionally, ancillary protein that functions as a regulatory subunit of the voltage-gated potassium (Kv) channel complex composed of pore-forming and potassium-conducting alpha subunits and of regulatory beta subunits. KCNE3 beta subunit modulates the gating kinetics and enhances stability of the channel complex. Alters the gating of the delayed rectifier Kv channel containing KCNB1 alpha subunit. Associates with KCNC4/Kv3.4 alpha subunit to form the subthreshold Kv channel in skeletal muscle and to establish the resting membrane potential (RMP) in muscle cells. Association with KCNQ1/KCLQT1 alpha subunit may form the intestinal cAMP-stimulated potassium channel involved in chloride secretion that produces a current with nearly instantaneous activation with a linear current-voltage relationship. This Rattus norvegicus (Rat) protein is Potassium voltage-gated channel subfamily E member 3.